The sequence spans 629 residues: Dolichyl-diphosphooligosaccharide--protein glycosyltransferase subunit 2 (629 aa).

An N-terminal signal peptide occupies residues 1-22; the sequence is MAPPGSRTVLLLALTIIARTQA. Residues 23 to 541 are Lumenal-facing; it reads LKPTHYLTKH…RDPEKRPPTV (519 aa). The N-linked (GlcNAc...) asparagine glycan is linked to Asn106. Residue Lys154 forms a Glycyl lysine isopeptide (Lys-Gly) (interchain with G-Cter in ubiquitin) linkage. A helical membrane pass occupies residues 542–562; sequence VSNTFTGLILSPLLLLFALWI. The Cytoplasmic segment spans residues 563–570; that stretch reads RIGAKISN. Residues 571–591 form a helical membrane-spanning segment; sequence FTFGLTIIFHLGHAMLAMYVY. At 592-594 the chain is on the lumenal side; it reads WTQ. The chain crosses the membrane as a helical span at residues 595–615; that stretch reads LNMFQTLKYLAILGSVTFLAG. Topologically, residues 616 to 629 are cytoplasmic; it reads NRMLAQQAIKRTAH.

It belongs to the SWP1 family. As to quaternary structure, component of the oligosaccharyltransferase (OST) complex. OST exists in two different complex forms which contain common core subunits RPN1, RPN2, OST48, OST4, DAD1 and TMEM258, either STT3A or STT3B as catalytic subunits, and form-specific accessory subunits. STT3A complex assembly occurs through the formation of 3 subcomplexes. Subcomplex 1 contains RPN1 and TMEM258, subcomplex 2 contains the STT3A-specific subunits STT3A, DC2/OSTC, and KCP2 as well as the core subunit OST4, and subcomplex 3 contains RPN2, DAD1, and OST48. The STT3A complex can form stable complexes with the Sec61 complex or with both the Sec61 and TRAP complexes. Interacts with DDI2. Interacts with TMEM35A/NACHO.

The protein resides in the endoplasmic reticulum. Its subcellular location is the endoplasmic reticulum membrane. The protein operates within protein modification; protein glycosylation. Functionally, subunit of the oligosaccharyl transferase (OST) complex that catalyzes the initial transfer of a defined glycan (Glc(3)Man(9)GlcNAc(2) in eukaryotes) from the lipid carrier dolichol-pyrophosphate to an asparagine residue within an Asn-X-Ser/Thr consensus motif in nascent polypeptide chains, the first step in protein N-glycosylation. N-glycosylation occurs cotranslationally and the complex associates with the Sec61 complex at the channel-forming translocon complex that mediates protein translocation across the endoplasmic reticulum (ER). All subunits are required for a maximal enzyme activity. In Sus scrofa (Pig), this protein is Dolichyl-diphosphooligosaccharide--protein glycosyltransferase subunit 2.